A 420-amino-acid polypeptide reads, in one-letter code: Glucose-1-phosphate adenylyltransferase (420 aa).

Alpha-D-glucose 1-phosphate-binding positions include Tyr-107, Gly-172, 187 to 188 (EK), and Ser-205.

It belongs to the bacterial/plant glucose-1-phosphate adenylyltransferase family. As to quaternary structure, homotetramer.

The enzyme catalyses alpha-D-glucose 1-phosphate + ATP + H(+) = ADP-alpha-D-glucose + diphosphate. The protein operates within glycan biosynthesis; glycogen biosynthesis. Involved in the biosynthesis of ADP-glucose, a building block required for the elongation reactions to produce glycogen. Catalyzes the reaction between ATP and alpha-D-glucose 1-phosphate (G1P) to produce pyrophosphate and ADP-Glc. This chain is Glucose-1-phosphate adenylyltransferase, found in Rhodopseudomonas palustris (strain TIE-1).